The chain runs to 305 residues: NAD-dependent protein deacylase SIR4 (305 aa).

The N-terminal 10 residues, 1–10 (MSAQVMHNRV), are a transit peptide targeting the mitochondrion. In terms of domain architecture, Deacetylase sirtuin-type spans 11–305 (MGTVKDSASK…VLEELASTIR (295 aa)). NAD(+) contacts are provided by residues 37-57 (GAGV…GIYS) and 118-121 (QNVD). H139 (proton acceptor) is an active-site residue. C147, C150, C209, and C212 together coordinate Zn(2+). Residues 249-251 (GSS), 275-277 (NLG), and S293 each bind NAD(+).

The protein belongs to the sirtuin family. Class II subfamily. Zn(2+) is required as a cofactor.

The protein localises to the mitochondrion matrix. The enzyme catalyses N(6)-acetyl-L-lysyl-[protein] + NAD(+) + H2O = 2''-O-acetyl-ADP-D-ribose + nicotinamide + L-lysyl-[protein]. Its function is as follows. NAD-dependent protein deacylase. Catalyzes the NAD-dependent hydrolysis of acyl groups from lysine residues. In Batrachochytrium dendrobatidis (strain JAM81 / FGSC 10211) (Frog chytrid fungus), this protein is NAD-dependent protein deacylase SIR4.